The primary structure comprises 1714 residues: Protein ESSENTIAL FOR POTEXVIRUS ACCUMULATION 1 (1714 aa).

Disordered stretches follow at residues 1 to 296 and 358 to 511; these read MANS…PPHL and IVSS…SKGE. Phosphoserine is present on Ser39. A compositionally biased stretch (polar residues) spans 58–75; sequence DPNQYGNHSDVVRTTGNG. 2 stretches are compositionally biased toward basic and acidic residues: residues 96–136 and 143–203; these read ESGR…DRWD and GEQR…REKG. Composition is skewed to polar residues over residues 230–244 and 268–278; these read HNQSTPNKQVTSFSH and IFTSAPNQSHP. 2 stretches are compositionally biased toward basic and acidic residues: residues 389-422 and 430-441; these read GSREDMTFGAEESKDESGETRNYPDDKFRPEASH and RGNEAPVRELKE. Positions 444-463 are enriched in polar residues; that stretch reads MQGNAHVQSASPWRQSSGGE. The segment covering 464-483 has biased composition (basic and acidic residues); the sequence is RSNRNSHDWNDPSADSRLKS. Residues 546–597 enclose the GYF domain; sequence ELSLYYKDPQGLIQGPFSGSDIIGWFEAGYFGIDLLVRLASAPNDSPFSLLG. Disordered stretches follow at residues 728-753, 1092-1205, and 1437-1566; these read ESANLMPGSENVSENAQQPTRSPSSD, VKNN…KPAP, and QEKM…GKKE. The segment covering 737–753 has biased composition (polar residues); sequence ENVSENAQQPTRSPSSD. The segment covering 1142–1162 has biased composition (basic and acidic residues); it reads SEIKGKTKKSADTLIDNDTHL. The span at 1163-1180 shows a compositional bias: polar residues; that stretch reads IKSSTATASNTSQMSSEV. Residues 1467–1488 show a composition bias toward low complexity; the sequence is ASWSRSASSPSQAVSQSSSQSK. Residues 1515–1544 are compositionally biased toward polar residues; the sequence is LTSQNSWGTKNTPGKVNAGTSLNRQKSVSM.

Associates with eIF4E initiation factors and the ribosome complex, thus likely contributing to the proper translation of target proteins. Interacts directly with RPL18B and eIF4E1. Binds to SMG7. Quickly phosphorylated at Ser-39 after treatment of seedlings with the pathogen-associated molecular pattern (PAMP) flg22. As to expression, expressed in all tissues, mostly in flowers, leaves and stems, and, to a lower extent, in roots (at protein level).

The protein resides in the cytoplasm. It is found in the cytosol. It localises to the P-body. Its function is as follows. Translational repressor involved in the negative regulation of immune receptor accumulation via the inhibition of nucleotide-binding leucine-rich repeat (NLR) receptor mediated defense. Represses NLR protein accumulation (e.g. SNC1, RPS4, RPM1 and RPS2). Together with SMG7, helps to restrict effector-triggered immunity (ETI) cell death induction during pathogen infection in a salicylic acid- (SA) and reactive oxygen species- (ROS) independent manner. Required for pathogen-associated molecular pattern (PAMP)-induced suppression of necrotrophic fungal (e.g. F.moniliforme) pathogen-derived mycotoxin-triggered (e.g. fumonisin B1) cell death. In terms of biological role, (Microbial infection) Required for early steps of plantago asiatica mosaic virus (PlAMV, genus Potexvirus) infection. Facilitates pathogenic growth of avirulent hemi-biotrophic bacteria P.syringae pv. tomato (Pst) DC3000 (e.g. AvrRps4 and AvrRpm1) and of the compatible oomycete H.arabidopsidis Noco2. This Arabidopsis thaliana (Mouse-ear cress) protein is Protein ESSENTIAL FOR POTEXVIRUS ACCUMULATION 1.